The chain runs to 577 residues: Arginine--tRNA ligase (577 aa).

Positions 122-132 (PNVAKEMHVGH) match the 'HIGH' region motif.

It belongs to the class-I aminoacyl-tRNA synthetase family. As to quaternary structure, monomer.

The protein resides in the cytoplasm. It carries out the reaction tRNA(Arg) + L-arginine + ATP = L-arginyl-tRNA(Arg) + AMP + diphosphate. The protein is Arginine--tRNA ligase of Enterobacter sp. (strain 638).